A 218-amino-acid polypeptide reads, in one-letter code: Thiopurine S-methyltransferase (218 aa).

Residues tryptophan 10, leucine 45, glutamate 66, and arginine 123 each coordinate S-adenosyl-L-methionine.

This sequence belongs to the class I-like SAM-binding methyltransferase superfamily. TPMT family.

Its subcellular location is the cytoplasm. It catalyses the reaction S-adenosyl-L-methionine + a thiopurine = S-adenosyl-L-homocysteine + a thiopurine S-methylether.. This is Thiopurine S-methyltransferase from Pseudomonas paraeruginosa (strain DSM 24068 / PA7) (Pseudomonas aeruginosa (strain PA7)).